The primary structure comprises 484 residues: PTS system N-acetylmuramic acid-specific EIIBC component (484 aa).

One can recognise a PTS EIIB type-1 domain in the interval 1–89 (MAKITTSMIQ…NEMMEGEEDN (89 aa)). Cys28 (phosphocysteine intermediate; for EIIB activity) is an active-site residue. Residues 83 to 106 (MEGEEDNSASTTAESRDLKDVASE) are disordered. Residues 96 to 106 (ESRDLKDVASE) show a composition bias toward basic and acidic residues. The region spanning 124–484 (SKFATIFTPL…FFGTKNVDLS (361 aa)) is the PTS EIIC type-1 domain. Transmembrane regions (helical) follow at residues 126-146 (FATIFTPLIPGFIAAGLLLGF), 168-188 (LILYMKVFSKGLFSFLSILIG), 194-214 (AFGGSGVNGAILASLFVLGYN), 232-252 (GIDPRGNIIGVLIAAIIGAGV), 273-293 (TLLIMGAVTFVVIMPIGGVLF), 312-332 (ILAGLFLISVMFGIHQGFVPV), 345-365 (LFPILAMAGAGQVGAALALYA), 379-399 (GSIIPGFLGIGEPLIYGVTLP), 404-424 (FITACVGGAAGGFFIGLVSYM), and 451-471 (IFAGMLVFAAGLVISYVAGFL).

The protein resides in the cell inner membrane. The enzyme catalyses N-acetyl-beta-D-muramate(out) + N(pros)-phospho-L-histidyl-[protein] = N-acetyl-beta-D-muramate 6-phosphate(in) + L-histidyl-[protein]. Functionally, the phosphoenolpyruvate-dependent sugar phosphotransferase system (sugar PTS), a major carbohydrate active transport system, catalyzes the phosphorylation of incoming sugar substrates concomitantly with their translocation across the cell membrane. This system is involved in N-acetylmuramic acid (MurNAc) transport, yielding cytoplasmic MurNAc-6-P. Is also able to take up anhydro-N-acetylmuramic acid (anhMurNAc), but cannot phosphorylate the carbon 6, probably because of the 1,6-anhydro ring. This Aliivibrio fischeri (strain ATCC 700601 / ES114) (Vibrio fischeri) protein is PTS system N-acetylmuramic acid-specific EIIBC component (murP).